The sequence spans 178 residues: ATP synthase subunit b (178 aa).

A helical membrane pass occupies residues 11–31 (IIPEPVEIVVGLVAFLLLLFV).

The protein belongs to the ATPase B chain family. In terms of assembly, F-type ATPases have 2 components, F(1) - the catalytic core - and F(0) - the membrane proton channel. F(1) has five subunits: alpha(3), beta(3), gamma(1), delta(1), epsilon(1). F(0) has three main subunits: a(1), b(2) and c(10-14). The alpha and beta chains form an alternating ring which encloses part of the gamma chain. F(1) is attached to F(0) by a central stalk formed by the gamma and epsilon chains, while a peripheral stalk is formed by the delta and b chains.

It is found in the cell membrane. Its function is as follows. F(1)F(0) ATP synthase produces ATP from ADP in the presence of a proton or sodium gradient. F-type ATPases consist of two structural domains, F(1) containing the extramembraneous catalytic core and F(0) containing the membrane proton channel, linked together by a central stalk and a peripheral stalk. During catalysis, ATP synthesis in the catalytic domain of F(1) is coupled via a rotary mechanism of the central stalk subunits to proton translocation. In terms of biological role, component of the F(0) channel, it forms part of the peripheral stalk, linking F(1) to F(0). The polypeptide is ATP synthase subunit b (Saccharopolyspora erythraea (strain ATCC 11635 / DSM 40517 / JCM 4748 / NBRC 13426 / NCIMB 8594 / NRRL 2338)).